Consider the following 318-residue polypeptide: HTH-type transcriptional regulatory protein TyrR (318 aa).

Positions 15–239 (FIVQSEAMKS…LYNTLYRACS (225 aa)) constitute a Sigma-54 factor interaction; truncated domain. ATP-binding positions include 43–50 (GETGSGKD) and 101–110 (ANKGTVLLDG). The H-T-H motif DNA-binding region spans 292 to 312 (STRKLAQRLGVSHTAIANKLK).

As to quaternary structure, homodimer. In presence of tyrosine (or high concentrations of phenylalanine or tryptophan) and ATP, it self-associates to form a hexamer.

It localises to the cytoplasm. Its activity is regulated as follows. The DNA binding ability is drastically reduced in the presence of ATP. Tyrosine further reduces the binding affinity of TyrR in the presence of ATP. Transcriptional regulator of the TyrR regulon, which includes a number of genes coding for proteins involved in the biosynthesis or transport of the three aromatic amino acids, phenylalanine, tyrosine and tryptophan. These three aromatic amino acids act as effectors which bind to the TyrR protein to form an active regulatory protein. Acts by binding specifically to TyrR boxes in the promoter region of the target genes. Can efficiently repress the transcription of the aroF promoter, but lacks the ability to function as a transcriptional activator. In Haemophilus influenzae (strain ATCC 51907 / DSM 11121 / KW20 / Rd), this protein is HTH-type transcriptional regulatory protein TyrR.